The primary structure comprises 166 residues: Interferon gamma (166 aa).

An N-terminal signal peptide occupies residues 1–23; the sequence is MNYTSYILAFQLCVILCSSGYYC. Pyrrolidone carboxylic acid is present on Gln24. N-linked (GlcNAc...) asparagine glycans are attached at residues Asn39 and Asn106.

This sequence belongs to the type II (or gamma) interferon family. Homodimer. Interacts with IFNGR1 (via extracellular domain); this interaction promotes IFNGR1 dimerization. Released primarily from activated T lymphocytes.

It localises to the secreted. Functionally, type II interferon produced by immune cells such as T-cells and NK cells that plays crucial roles in antimicrobial, antiviral, and antitumor responses by activating effector immune cells and enhancing antigen presentation. Primarily signals through the JAK-STAT pathway after interaction with its receptor IFNGR1 to affect gene regulation. Upon IFNG binding, IFNGR1 intracellular domain opens out to allow association of downstream signaling components JAK2, JAK1 and STAT1, leading to STAT1 activation, nuclear translocation and transcription of IFNG-regulated genes. Many of the induced genes are transcription factors such as IRF1 that are able to further drive regulation of a next wave of transcription. Plays a role in class I antigen presentation pathway by inducing a replacement of catalytic proteasome subunits with immunoproteasome subunits. In turn, increases the quantity, quality, and repertoire of peptides for class I MHC loading. Increases the efficiency of peptide generation also by inducing the expression of activator PA28 that associates with the proteasome and alters its proteolytic cleavage preference. Up-regulates as well MHC II complexes on the cell surface by promoting expression of several key molecules such as cathepsins B/CTSB, H/CTSH, and L/CTSL. Participates in the regulation of hematopoietic stem cells during development and under homeostatic conditions by affecting their development, quiescence, and differentiation. The chain is Interferon gamma (IFNG) from Ailuropoda melanoleuca (Giant panda).